The sequence spans 463 residues: Topoisomerase I damage affected protein 11 (463 aa).

The interval 1 to 110 (MNGSTSSDAV…TIPDSPIPTA (110 aa)) is disordered. Composition is skewed to polar residues over residues 17–32 (TTPSPVKQTLTLGSDT) and 40–55 (ITPSIRRSNSTRSKGI). Low complexity predominate over residues 96–110 (SSPSSTIPDSPIPTA). Positions 145 to 177 (IVEIKDSIGNLTSKLQRNENELHSLREVIQRSL) form a coiled coil. Disordered stretches follow at residues 180–255 (ELNS…DSTL), 281–358 (MIPQ…TESH), and 388–413 (ADEDVPESRSHVTKGPSGFSNSNDQK). Over residues 225–238 (LSSSSSGVPPVLSS) the composition is skewed to low complexity. The span at 288-304 (EGSDKTMDSHKSRHSED) shows a compositional bias: basic and acidic residues. Residues 305–322 (STSSLGSISSPLNSKSKS) are compositionally biased toward low complexity.

It belongs to the TDA11 family.

It is found in the cytoplasm. In Debaryomyces hansenii (strain ATCC 36239 / CBS 767 / BCRC 21394 / JCM 1990 / NBRC 0083 / IGC 2968) (Yeast), this protein is Topoisomerase I damage affected protein 11 (TDA11).